We begin with the raw amino-acid sequence, 453 residues long: tRNA modification GTPase MnmE (453 aa).

The (6S)-5-formyl-5,6,7,8-tetrahydrofolate site is built by arginine 22, glutamate 79, and lysine 119. The 162-residue stretch at 215–376 (GMKVVIAGRP…LRNHLKECMG (162 aa)) folds into the TrmE-type G domain. Asparagine 225 is a binding site for K(+). Residues 225 to 230 (NAGKSS), 244 to 250 (TDIAGTT), 269 to 272 (DTAG), and 334 to 337 (NKAD) each bind GTP. Serine 229 contacts Mg(2+). Threonine 244, isoleucine 246, and threonine 249 together coordinate K(+). A Mg(2+)-binding site is contributed by threonine 250. Residue lysine 453 coordinates (6S)-5-formyl-5,6,7,8-tetrahydrofolate.

This sequence belongs to the TRAFAC class TrmE-Era-EngA-EngB-Septin-like GTPase superfamily. TrmE GTPase family. In terms of assembly, homodimer. Heterotetramer of two MnmE and two MnmG subunits. Requires K(+) as cofactor.

It localises to the cytoplasm. Its function is as follows. Exhibits a very high intrinsic GTPase hydrolysis rate. Involved in the addition of a carboxymethylaminomethyl (cmnm) group at the wobble position (U34) of certain tRNAs, forming tRNA-cmnm(5)s(2)U34. In Vibrio vulnificus (strain YJ016), this protein is tRNA modification GTPase MnmE.